Reading from the N-terminus, the 505-residue chain is 2,3-bisphosphoglycerate-independent phosphoglycerate mutase (505 aa).

Residues Asp-12 and Ser-62 each coordinate Mn(2+). Residue Ser-62 is the Phosphoserine intermediate of the active site. Substrate-binding positions include His-123, 153–154 (RD), Arg-185, Arg-191, 257–260 (RPDR), and Lys-330. Asp-397, His-401, Asp-438, His-439, and His-456 together coordinate Mn(2+).

This sequence belongs to the BPG-independent phosphoglycerate mutase family. Monomer. The cofactor is Mn(2+).

The enzyme catalyses (2R)-2-phosphoglycerate = (2R)-3-phosphoglycerate. The protein operates within carbohydrate degradation; glycolysis; pyruvate from D-glyceraldehyde 3-phosphate: step 3/5. Its function is as follows. Catalyzes the interconversion of 2-phosphoglycerate and 3-phosphoglycerate. The chain is 2,3-bisphosphoglycerate-independent phosphoglycerate mutase from Staphylococcus aureus (strain Mu50 / ATCC 700699).